The primary structure comprises 713 residues: Probable 1-deoxy-D-xylulose-5-phosphate synthase 2, chloroplastic (713 aa).

The transit peptide at 1 to 30 (MALQASSSPSMFRAIPTNTNASCRRKLQVR) directs the protein to the chloroplast. Thiamine diphosphate contacts are provided by residues His140 and 181–183 (GHS). Asp212 contributes to the Mg(2+) binding site. Thiamine diphosphate-binding positions include 213–214 (GA), Asn241, Tyr362, and Glu444. Asn241 provides a ligand contact to Mg(2+).

The protein belongs to the transketolase family. DXPS subfamily. Homodimer. The cofactor is Mg(2+). Thiamine diphosphate serves as cofactor.

It is found in the plastid. The protein localises to the chloroplast. The catalysed reaction is D-glyceraldehyde 3-phosphate + pyruvate + H(+) = 1-deoxy-D-xylulose 5-phosphate + CO2. The protein operates within metabolic intermediate biosynthesis; 1-deoxy-D-xylulose 5-phosphate biosynthesis; 1-deoxy-D-xylulose 5-phosphate from D-glyceraldehyde 3-phosphate and pyruvate: step 1/1. Catalyzes the acyloin condensation reaction between C atoms 2 and 3 of pyruvate and glyceraldehyde 3-phosphate to yield 1-deoxy-D-xylulose-5-phosphate (DXP). Is a limiting enzyme for plastidic isoprenoid biosynthesis and essential for chloroplast development. This is Probable 1-deoxy-D-xylulose-5-phosphate synthase 2, chloroplastic from Oryza sativa subsp. japonica (Rice).